Consider the following 85-residue polypeptide: UPF0297 protein CHY_0540 (85 aa).

The protein belongs to the UPF0297 family.

This is UPF0297 protein CHY_0540 from Carboxydothermus hydrogenoformans (strain ATCC BAA-161 / DSM 6008 / Z-2901).